A 948-amino-acid polypeptide reads, in one-letter code: Valine--tRNA ligase (948 aa).

Residues 40–50 (PNVTGSLHMGH) carry the 'HIGH' region motif. The 'KMSKS' region signature appears at 551 to 555 (KMSKS). ATP is bound at residue K554. The stretch at 879-945 (LIDKGAELAR…GKLAEQHARI (67 aa)) forms a coiled coil.

It belongs to the class-I aminoacyl-tRNA synthetase family. ValS type 1 subfamily. Monomer.

The protein localises to the cytoplasm. The enzyme catalyses tRNA(Val) + L-valine + ATP = L-valyl-tRNA(Val) + AMP + diphosphate. In terms of biological role, catalyzes the attachment of valine to tRNA(Val). As ValRS can inadvertently accommodate and process structurally similar amino acids such as threonine, to avoid such errors, it has a 'posttransfer' editing activity that hydrolyzes mischarged Thr-tRNA(Val) in a tRNA-dependent manner. The chain is Valine--tRNA ligase from Pseudomonas syringae pv. tomato (strain ATCC BAA-871 / DC3000).